The chain runs to 356 residues: Histidinol-phosphate aminotransferase (356 aa).

Position 214 is an N6-(pyridoxal phosphate)lysine (Lys214).

Belongs to the class-II pyridoxal-phosphate-dependent aminotransferase family. Histidinol-phosphate aminotransferase subfamily. Homodimer. Pyridoxal 5'-phosphate is required as a cofactor.

The catalysed reaction is L-histidinol phosphate + 2-oxoglutarate = 3-(imidazol-4-yl)-2-oxopropyl phosphate + L-glutamate. Its pathway is amino-acid biosynthesis; L-histidine biosynthesis; L-histidine from 5-phospho-alpha-D-ribose 1-diphosphate: step 7/9. The polypeptide is Histidinol-phosphate aminotransferase (Shigella boydii serotype 4 (strain Sb227)).